Reading from the N-terminus, the 388-residue chain is Succinate--CoA ligase [ADP-forming] subunit beta (388 aa).

The ATP-grasp domain occupies 9 to 244; the sequence is KELFRTYGIP…TDEEDPLEVE (236 aa). ATP is bound by residues lysine 46, 53–55, glutamate 99, valine 102, and glutamate 107; that span reads GRG. Mg(2+) is bound by residues asparagine 199 and aspartate 213. Substrate contacts are provided by residues asparagine 264 and 321-323; that span reads GIL.

This sequence belongs to the succinate/malate CoA ligase beta subunit family. As to quaternary structure, heterotetramer of two alpha and two beta subunits. The cofactor is Mg(2+).

The catalysed reaction is succinate + ATP + CoA = succinyl-CoA + ADP + phosphate. The enzyme catalyses GTP + succinate + CoA = succinyl-CoA + GDP + phosphate. It participates in carbohydrate metabolism; tricarboxylic acid cycle; succinate from succinyl-CoA (ligase route): step 1/1. Succinyl-CoA synthetase functions in the citric acid cycle (TCA), coupling the hydrolysis of succinyl-CoA to the synthesis of either ATP or GTP and thus represents the only step of substrate-level phosphorylation in the TCA. The beta subunit provides nucleotide specificity of the enzyme and binds the substrate succinate, while the binding sites for coenzyme A and phosphate are found in the alpha subunit. This is Succinate--CoA ligase [ADP-forming] subunit beta from Desulfosudis oleivorans (strain DSM 6200 / JCM 39069 / Hxd3) (Desulfococcus oleovorans).